A 418-amino-acid chain; its full sequence is Histidine--tRNA ligase (418 aa).

Belongs to the class-II aminoacyl-tRNA synthetase family.

Its subcellular location is the cytoplasm. It catalyses the reaction tRNA(His) + L-histidine + ATP = L-histidyl-tRNA(His) + AMP + diphosphate + H(+). This Methanococcus vannielii (strain ATCC 35089 / DSM 1224 / JCM 13029 / OCM 148 / SB) protein is Histidine--tRNA ligase.